Reading from the N-terminus, the 85-residue chain is Putative membrane protein insertion efficiency factor (85 aa).

This sequence belongs to the UPF0161 family.

Its subcellular location is the cell inner membrane. In terms of biological role, could be involved in insertion of integral membrane proteins into the membrane. This chain is Putative membrane protein insertion efficiency factor, found in Dictyoglomus thermophilum (strain ATCC 35947 / DSM 3960 / H-6-12).